The chain runs to 467 residues: Cysteine--tRNA ligase (467 aa).

C29 provides a ligand contact to Zn(2+). The short motif at 31-41 is the 'HIGH' region element; sequence PTVYNYVHIGN. Zn(2+) contacts are provided by C209, H234, and E238. The 'KMSKS' region signature appears at 267–271; that stretch reads KMSKS. K270 contributes to the ATP binding site.

This sequence belongs to the class-I aminoacyl-tRNA synthetase family. Monomer. The cofactor is Zn(2+).

It localises to the cytoplasm. The catalysed reaction is tRNA(Cys) + L-cysteine + ATP = L-cysteinyl-tRNA(Cys) + AMP + diphosphate. In Xylella fastidiosa (strain Temecula1 / ATCC 700964), this protein is Cysteine--tRNA ligase.